Here is an 828-residue protein sequence, read N- to C-terminus: Putative alpha-1,3-mannosyltransferase MNN12 (828 aa).

At methionine 1–lysine 13 the chain is on the cytoplasmic side. Residues valine 14–asparagine 34 traverse the membrane as a helical segment. The Lumenal segment spans residues tyrosine 35–glutamate 828. Asparagine 38 is a glycosylation site (N-linked (GlcNAc...) asparagine). Residues histidine 80 to asparagine 104 are disordered. The segment covering proline 86 to lysine 103 has biased composition (polar residues). Residues asparagine 247, asparagine 437, and asparagine 591 are each glycosylated (N-linked (GlcNAc...) asparagine).

The protein belongs to the MNN1/MNT family.

The protein localises to the golgi apparatus membrane. Its pathway is protein modification; protein glycosylation. Its function is as follows. Responsible for addition of the terminal mannose residues to the outer chain of core N-linked polysaccharides and to O-linked mannotriose. Implicated in late Golgi modifications. The chain is Putative alpha-1,3-mannosyltransferase MNN12 (MNN12) from Candida albicans (strain SC5314 / ATCC MYA-2876) (Yeast).